A 296-amino-acid chain; its full sequence is Probable endonuclease 4 (296 aa).

Zn(2+) contacts are provided by His68, His109, Glu144, Asp178, His181, His213, Asp226, His228, and Glu258.

This sequence belongs to the AP endonuclease 2 family. Requires Zn(2+) as cofactor.

It carries out the reaction Endonucleolytic cleavage to 5'-phosphooligonucleotide end-products.. Functionally, endonuclease IV plays a role in DNA repair. It cleaves phosphodiester bonds at apurinic or apyrimidinic (AP) sites, generating a 3'-hydroxyl group and a 5'-terminal sugar phosphate. The protein is Probable endonuclease 4 of Staphylococcus epidermidis (strain ATCC 35984 / DSM 28319 / BCRC 17069 / CCUG 31568 / BM 3577 / RP62A).